We begin with the raw amino-acid sequence, 269 residues long: Eukaryotic translation initiation factor 3 subunit G-2 (269 aa).

The region spanning 189 to 267 (SAVRISNLSE…LILCVEWSKP (79 aa)) is the RRM domain.

It belongs to the eIF-3 subunit G family. Component of the eukaryotic translation initiation factor 3 (eIF-3) complex. The eIF-3 complex interacts with pix.

It is found in the cytoplasm. RNA-binding component of the eukaryotic translation initiation factor 3 (eIF-3) complex, which is involved in protein synthesis of a specialized repertoire of mRNAs and, together with other initiation factors, stimulates binding of mRNA and methionyl-tRNAi to the 40S ribosome. The eIF-3 complex specifically targets and initiates translation of a subset of mRNAs involved in cell proliferation. This subunit can bind 18S rRNA. The protein is Eukaryotic translation initiation factor 3 subunit G-2 of Drosophila ananassae (Fruit fly).